A 115-amino-acid chain; its full sequence is DNA-directed RNA polymerase II subunit RPB11-b2 (115 aa).

This sequence belongs to the archaeal Rpo11/eukaryotic RPB11/RPC19 RNA polymerase subunit family. In terms of assembly, component of the RNA polymerase II (Pol II) complex consisting of 12 subunits.

It is found in the nucleus. In terms of biological role, DNA-dependent RNA polymerase catalyzes the transcription of DNA into RNA using the four ribonucleoside triphosphates as substrates. Component of RNA polymerase II which synthesizes mRNA precursors and many functional non-coding RNAs. Pol II is the central component of the basal RNA polymerase II transcription machinery. It is composed of mobile elements that move relative to each other. RPB11 is part of the core element with the central large cleft. This Homo sapiens (Human) protein is DNA-directed RNA polymerase II subunit RPB11-b2 (POLR2J3).